The sequence spans 623 residues: Phosphomethylpyrimidine synthase (623 aa).

Substrate contacts are provided by residues Asn-221, Met-250, Tyr-279, His-315, 335–337 (SRG), 376–379 (DGLR), and Glu-415. His-419 is a binding site for Zn(2+). Residue Tyr-442 participates in substrate binding. A Zn(2+)-binding site is contributed by His-483. Residues Cys-563, Cys-566, and Cys-571 each coordinate [4Fe-4S] cluster.

Belongs to the ThiC family. Homodimer. It depends on [4Fe-4S] cluster as a cofactor.

It catalyses the reaction 5-amino-1-(5-phospho-beta-D-ribosyl)imidazole + S-adenosyl-L-methionine = 4-amino-2-methyl-5-(phosphooxymethyl)pyrimidine + CO + 5'-deoxyadenosine + formate + L-methionine + 3 H(+). The protein operates within cofactor biosynthesis; thiamine diphosphate biosynthesis. Functionally, catalyzes the synthesis of the hydroxymethylpyrimidine phosphate (HMP-P) moiety of thiamine from aminoimidazole ribotide (AIR) in a radical S-adenosyl-L-methionine (SAM)-dependent reaction. The sequence is that of Phosphomethylpyrimidine synthase from Parvibaculum lavamentivorans (strain DS-1 / DSM 13023 / NCIMB 13966).